Consider the following 152-residue polypeptide: 3-hydroxyacyl-[acyl-carrier-protein] dehydratase FabZ (152 aa).

The active site involves histidine 57.

It belongs to the thioester dehydratase family. FabZ subfamily.

The protein localises to the cytoplasm. It carries out the reaction a (3R)-hydroxyacyl-[ACP] = a (2E)-enoyl-[ACP] + H2O. Involved in unsaturated fatty acids biosynthesis. Catalyzes the dehydration of short chain beta-hydroxyacyl-ACPs and long chain saturated and unsaturated beta-hydroxyacyl-ACPs. This chain is 3-hydroxyacyl-[acyl-carrier-protein] dehydratase FabZ, found in Bradyrhizobium sp. (strain ORS 278).